A 286-amino-acid chain; its full sequence is Transcription initiation factor IIA large subunit (286 aa).

Disordered regions lie at residues 120–145 (NTVE…ADVT), 167–195 (TVEN…KEKE), and 208–236 (KRSA…EGEE). A compositionally biased stretch (basic and acidic residues) spans 175–195 (SEKKDDEEKEEDVEKTRKEKE). Acidic residues predominate over residues 214–236 (DTDEVGSELDDSDDDYLISEGEE).

Belongs to the TFIIA subunit 1 family. In terms of assembly, TFIIA is a heterodimer composed of the large TOA1 and a small TOA2 subunits. Interacts with KAP122.

Its subcellular location is the cytoplasm. The protein resides in the nucleus. TFIIA is a component of the transcription machinery of RNA polymerase II and implicated in the regulation of basal transcription. Interacts with TBP (the TATA-binding protein). This is Transcription initiation factor IIA large subunit (TOA1) from Saccharomyces cerevisiae (strain ATCC 204508 / S288c) (Baker's yeast).